We begin with the raw amino-acid sequence, 154 residues long: Lipoprotein signal peptidase (154 aa).

A run of 3 helical transmembrane segments spans residues 8 to 28 (LYLI…NYIV), 58 to 78 (IFSG…AVVI), and 88 to 108 (NGLF…NFID). Active-site residues include Asp117 and Asp133. A helical membrane pass occupies residues 131–151 (IADSAITVGIILVFIYLIFIS).

The protein belongs to the peptidase A8 family.

The protein resides in the cell membrane. It carries out the reaction Release of signal peptides from bacterial membrane prolipoproteins. Hydrolyzes -Xaa-Yaa-Zaa-|-(S,diacylglyceryl)Cys-, in which Xaa is hydrophobic (preferably Leu), and Yaa (Ala or Ser) and Zaa (Gly or Ala) have small, neutral side chains.. It functions in the pathway protein modification; lipoprotein biosynthesis (signal peptide cleavage). This protein specifically catalyzes the removal of signal peptides from prolipoproteins. The sequence is that of Lipoprotein signal peptidase from Lactobacillus johnsonii (strain CNCM I-12250 / La1 / NCC 533).